We begin with the raw amino-acid sequence, 97 residues long: Sugar transporter SemiSWEET (97 aa).

The region spanning 4-70 (IERIGKALEP…IYGIYHKNPT (67 aa)) is the PQ-loop domain. 3 helical membrane passes run 15 to 35 (MLVMGLISPLATMPQLYKLYV), 44 to 65 (LSLTTWLLYSFIALLWTIYGIY), and 71 to 91 (IWVGNCLGFLMYVAMVVGIIA).

Homodimer.

The protein resides in the cell membrane. Its function is as follows. The homodimer mediates transmembrane sugar transport down a concentration gradient. Transport is probably effected by rocking-type movements, where a cargo-binding cavity opens first on one and then on the other side of the membrane. This Vibrio sp. (strain N418) protein is Sugar transporter SemiSWEET.